Reading from the N-terminus, the 315-residue chain is Initiation factor TFIIB homolog (315 aa).

It belongs to the asfivirus C315R family.

Its function is as follows. Putative initation factor. This chain is Initiation factor TFIIB homolog, found in African swine fever virus (strain Badajoz 1971 Vero-adapted) (Ba71V).